The chain runs to 764 residues: Calpain-like protease palB/RIM13 (764 aa).

A Calpain catalytic domain is found at 95–368; it reads GEFYPPLTVY…FKYFYINWNP (274 aa). Active-site residues include Cys165, His318, and Asn336.

Belongs to the peptidase C2 family. PalB/RIM13 subfamily.

In terms of biological role, required for the proteolytic cleavage of the transcription factor RIM101 in response to alkaline ambient pH. The protein is Calpain-like protease palB/RIM13 of Debaryomyces hansenii (strain ATCC 36239 / CBS 767 / BCRC 21394 / JCM 1990 / NBRC 0083 / IGC 2968) (Yeast).